The primary structure comprises 96 residues: Co-chaperonin GroES (96 aa).

It belongs to the GroES chaperonin family. Heptamer of 7 subunits arranged in a ring. Interacts with the chaperonin GroEL.

The protein localises to the cytoplasm. In terms of biological role, together with the chaperonin GroEL, plays an essential role in assisting protein folding. The GroEL-GroES system forms a nano-cage that allows encapsulation of the non-native substrate proteins and provides a physical environment optimized to promote and accelerate protein folding. GroES binds to the apical surface of the GroEL ring, thereby capping the opening of the GroEL channel. The sequence is that of Co-chaperonin GroES from Shewanella halifaxensis (strain HAW-EB4).